We begin with the raw amino-acid sequence, 436 residues long: UPF0597 protein DP0591 (436 aa).

This sequence belongs to the UPF0597 family.

The polypeptide is UPF0597 protein DP0591 (Desulfotalea psychrophila (strain LSv54 / DSM 12343)).